The chain runs to 163 residues: ADP-ribosylation factor-like protein 2-binding protein (163 aa).

Belongs to the ARL2BP family. In terms of assembly, found in a complex with ARL2BP, ARL2 and SLC25A6. Found in a complex with ARL2, ARL2BP and SLC25A4. Interacts with STAT2, STAT3 and STAT4. Interacts with GTP-bound ARL2 and ARL3; the complex ARL2-ARL2BP as well as ARL2BP alone, binds to SLC25A4. Interaction with ARL2 may be required for targeting to cilia basal body. Interacts with STAT3; interaction is enhanced with ARL2. As to expression, expressed in retina pigment epithelial cells (at protein level). Widely expressed.

The protein resides in the cytoplasm. Its subcellular location is the mitochondrion intermembrane space. It is found in the cytoskeleton. It localises to the microtubule organizing center. The protein localises to the centrosome. The protein resides in the nucleus. Its subcellular location is the spindle. It is found in the cilium basal body. Together with ARL2, plays a role in the nuclear translocation, retention and transcriptional activity of STAT3. May play a role as an effector of ARL2. This is ADP-ribosylation factor-like protein 2-binding protein (ARL2BP) from Homo sapiens (Human).